We begin with the raw amino-acid sequence, 477 residues long: Ribulose bisphosphate carboxylase large chain (477 aa).

The propeptide occupies 1-2 (MS). Residue P3 is modified to N-acetylproline. Position 14 is an N6,N6,N6-trimethyllysine (K14). 2 residues coordinate substrate: N123 and T173. The active-site Proton acceptor is the K175. A substrate-binding site is contributed by K177. The Mg(2+) site is built by K201, D203, and E204. The residue at position 201 (K201) is an N6-carboxylysine. The Proton acceptor role is filled by H294. 3 residues coordinate substrate: R295, H327, and S379.

Belongs to the RuBisCO large chain family. Type I subfamily. In terms of assembly, heterohexadecamer of 8 large chains and 8 small chains; disulfide-linked. The disulfide link is formed within the large subunit homodimers. Mg(2+) is required as a cofactor. Post-translationally, the disulfide bond which can form in the large chain dimeric partners within the hexadecamer appears to be associated with oxidative stress and protein turnover.

The protein localises to the plastid. Its subcellular location is the chloroplast. It catalyses the reaction 2 (2R)-3-phosphoglycerate + 2 H(+) = D-ribulose 1,5-bisphosphate + CO2 + H2O. The enzyme catalyses D-ribulose 1,5-bisphosphate + O2 = 2-phosphoglycolate + (2R)-3-phosphoglycerate + 2 H(+). In terms of biological role, ruBisCO catalyzes two reactions: the carboxylation of D-ribulose 1,5-bisphosphate, the primary event in carbon dioxide fixation, as well as the oxidative fragmentation of the pentose substrate in the photorespiration process. Both reactions occur simultaneously and in competition at the same active site. This is Ribulose bisphosphate carboxylase large chain from Hyophorbe lagenicaulis (Bottle palm).